The following is a 652-amino-acid chain: Acetyl-coenzyme A synthetase (652 aa).

CoA contacts are provided by residues 189-192 and serine 311; that span reads RGGK. ATP-binding positions include 387–389, 411–416, aspartate 500, and arginine 515; these read GEP and DTWWQT. Residue serine 523 participates in CoA binding. Arginine 526 contacts ATP. Mg(2+) is bound by residues valine 537, histidine 539, and isoleucine 542. Lysine 584 provides a ligand contact to CoA. Residue lysine 609 is modified to N6-acetyllysine.

The protein belongs to the ATP-dependent AMP-binding enzyme family. It depends on Mg(2+) as a cofactor. In terms of processing, acetylated. Deacetylation by the SIR2-homolog deacetylase activates the enzyme.

The enzyme catalyses acetate + ATP + CoA = acetyl-CoA + AMP + diphosphate. Its function is as follows. Catalyzes the conversion of acetate into acetyl-CoA (AcCoA), an essential intermediate at the junction of anabolic and catabolic pathways. AcsA undergoes a two-step reaction. In the first half reaction, AcsA combines acetate with ATP to form acetyl-adenylate (AcAMP) intermediate. In the second half reaction, it can then transfer the acetyl group from AcAMP to the sulfhydryl group of CoA, forming the product AcCoA. This Bartonella quintana (strain Toulouse) (Rochalimaea quintana) protein is Acetyl-coenzyme A synthetase.